The primary structure comprises 85 residues: uncharacterized protein (85 aa).

The protein belongs to the ycf76 family.

It localises to the plastid. The protein localises to the chloroplast. This is an uncharacterized protein from Oryza sativa subsp. japonica (Rice).